Consider the following 412-residue polypeptide: Protein MITOFERRINLIKE 1, chloroplastic (412 aa).

The transit peptide at 1-92 (MEARLSETLG…PGPEFLKWIK (92 aa)) directs the protein to the chloroplast. Residues 43-83 (VRNPKLKTKSSQKPPKFSANFRRSDPPFASTSISDPTHEKP) are disordered. Solcar repeat units follow at residues 112–198 (ERAI…GKSL), 206–288 (PTVL…LKAA), and 298–392 (LEPL…ARLT). Helical transmembrane passes span 115–135 (IIGA…LLPL), 167–187 (ILGF…SSAV), 208–228 (VLIP…IMVP), 262–282 (AGYS…YSSF), 303–323 (SVCC…PLDV), and 365–385 (TRGM…GYFA).

It belongs to the mitochondrial carrier (TC 2.A.29) family. As to expression, expressed in leaves, developing flowers and siliques.

The protein localises to the plastid. The protein resides in the chloroplast inner membrane. In terms of biological role, probably involved in iron transport into chloroplasts. This Arabidopsis thaliana (Mouse-ear cress) protein is Protein MITOFERRINLIKE 1, chloroplastic (MFL1).